A 489-amino-acid chain; its full sequence is Mitochondrial-processing peptidase subunit beta (489 aa).

Residues 1-45 (MAAAAARVVLLPAARRRLWGFSESLLIRGAAGRSSYFGENRLRST) constitute a mitochondrion transit peptide. Residue His101 coordinates Zn(2+). Glu104 acts as the Proton acceptor in catalysis. 2 residues coordinate Zn(2+): His105 and Glu181.

It belongs to the peptidase M16 family. In terms of assembly, heterodimer of PMPCA (alpha) and PMPCB (beta) subunits, forming the mitochondrial processing protease (MPP) in which PMPCA is involved in substrate recognition and binding and PMPCB is the catalytic subunit. Zn(2+) is required as a cofactor.

Its subcellular location is the mitochondrion matrix. The catalysed reaction is Release of N-terminal transit peptides from precursor proteins imported into the mitochondrion, typically with Arg in position P2.. Binding to PMPCA is required for catalytic activity. Catalytic subunit of the essential mitochondrial processing protease (MPP), which cleaves the mitochondrial sequence off newly imported precursors proteins. Preferentially, cleaves after an arginine at position P2. Required for PINK1 turnover by coupling PINK1 mitochondrial import and cleavage, which results in subsequent PINK1 proteolysis. This Pongo abelii (Sumatran orangutan) protein is Mitochondrial-processing peptidase subunit beta (PMPCB).